Consider the following 497-residue polypeptide: Homeotic protein empty spiracles (497 aa).

Disordered stretches follow at residues 34–117, 161–262, and 441–497; these read NDVS…HLSP, SPLQ…MMMP, and NRRT…DASH. The segment covering 35–50 has biased composition (polar residues); that stretch reads DVSTAGGNSTPDLSGP. Pro residues predominate over residues 51–68; the sequence is QSPPPGERNVPGSPPQTP. Positions 96–117 are enriched in low complexity; it reads PHAQQQQQQHLQAPHPHPHLSP. A compositionally biased stretch (polar residues) spans 161 to 176; that stretch reads SPLQTRLSPETEQPQM. 2 stretches are compositionally biased toward low complexity: residues 208-239 and 248-262; these read PKSVSPQSSQPSSSPTLLISSPHATPPQQQQQ and PAMMHPGGAGPMMMP. The segment at residues 391 to 450 is a DNA-binding region (homeobox); that stretch reads PKRIRTAFSPSQLLKLEHAFESNQYVVGAERKALAQNLNLSETQVKVWFQNRRTKHKRMQ. The segment covering 470 to 497 has biased composition (acidic residues); that stretch reads GDEDDDELIDMEMDECPSDEEHELDASH.

It belongs to the EMX homeobox family.

Its subcellular location is the nucleus. Functionally, acts as a homeotic selector gene controlling antennal and mandibular segment identity. This chain is Homeotic protein empty spiracles (ems), found in Drosophila melanogaster (Fruit fly).